The sequence spans 60 residues: MAVPKFKPSKSRSRTRRSINMRKKIPQFQECSNCGNLGVRHRICLKCGYYRNNQYLEIGL.

Belongs to the bacterial ribosomal protein bL32 family.

This Borreliella burgdorferi (strain ATCC 35210 / DSM 4680 / CIP 102532 / B31) (Borrelia burgdorferi) protein is Large ribosomal subunit protein bL32 (rpmF).